The sequence spans 276 residues: Pantothenate synthetase (276 aa).

Position 26-33 (26-33 (MGYLHEGH)) interacts with ATP. His33 (proton donor) is an active-site residue. Gln57 provides a ligand contact to (R)-pantoate. Gln57 contributes to the beta-alanine binding site. An ATP-binding site is contributed by 142-145 (GLKD). A (R)-pantoate-binding site is contributed by Gln148. Residues Ile171 and 179–182 (KSSR) each bind ATP.

The protein belongs to the pantothenate synthetase family. In terms of assembly, homodimer.

The protein resides in the cytoplasm. It catalyses the reaction (R)-pantoate + beta-alanine + ATP = (R)-pantothenate + AMP + diphosphate + H(+). It functions in the pathway cofactor biosynthesis; (R)-pantothenate biosynthesis; (R)-pantothenate from (R)-pantoate and beta-alanine: step 1/1. Catalyzes the condensation of pantoate with beta-alanine in an ATP-dependent reaction via a pantoyl-adenylate intermediate. This Exiguobacterium sp. (strain ATCC BAA-1283 / AT1b) protein is Pantothenate synthetase.